A 497-amino-acid chain; its full sequence is Proline--tRNA ligase (497 aa).

The protein belongs to the class-II aminoacyl-tRNA synthetase family. ProS type 3 subfamily. In terms of assembly, homodimer.

It is found in the cytoplasm. It carries out the reaction tRNA(Pro) + L-proline + ATP = L-prolyl-tRNA(Pro) + AMP + diphosphate. Its function is as follows. Catalyzes the attachment of proline to tRNA(Pro) in a two-step reaction: proline is first activated by ATP to form Pro-AMP and then transferred to the acceptor end of tRNA(Pro). The chain is Proline--tRNA ligase from Bacteroides fragilis (strain ATCC 25285 / DSM 2151 / CCUG 4856 / JCM 11019 / LMG 10263 / NCTC 9343 / Onslow / VPI 2553 / EN-2).